The primary structure comprises 410 residues: Chitin deacetylase 3 (410 aa).

The signal sequence occupies residues 1 to 18 (MYGHLSLSTLSLLAVVAA). A propeptide spanning residues 19–39 (APFHESWLQPRDSDVSQLFRR) is cleaved from the precursor. N-linked (GlcNAc...) asparagine glycans are attached at residues Asn-61 and Asn-80. The NodB homology domain maps to 124-314 (KVWALSFDDG…KAVANGWSVK (191 aa)). Asp-131 functions as the Proton acceptor in the catalytic mechanism. Asp-131 is a binding site for acetate. Asp-132 serves as a coordination point for Co(2+). An N-linked (GlcNAc...) asparagine glycan is attached at Asn-149. Co(2+) contacts are provided by His-183 and His-187. Tyr-225 provides a ligand contact to acetate. Asn-279 carries an N-linked (GlcNAc...) asparagine glycan. His-289 serves as the catalytic Proton donor. Asn-293 is a glycosylation site (N-linked (GlcNAc...) asparagine). Ser-385 is lipidated: GPI-anchor amidated serine. Residues 386–410 (SSWPIANRPSLFVIACGLALAAIMV) constitute a propeptide, removed in mature form.

This sequence belongs to the polysaccharide deacetylase family. Requires Co(2+) as cofactor.

It localises to the cell membrane. The catalysed reaction is [(1-&gt;4)-N-acetyl-beta-D-glucosaminyl](n) + n H2O = chitosan + n acetate. Hydrolyzes the N-acetamido groups of N-acetyl-D-glucosamine residues in chitin to form chitosan and acetate. Chitosan is required to anchor melanin to the cell wall, for maintenance of cell wall integrity, and for proper cytokinesis. Chitosan offers an advantage during infection as it is less readily detected than chitin by host immunosurveillance mechanisms. The polypeptide is Chitin deacetylase 3 (Cryptococcus neoformans var. neoformans serotype D (strain B-3501A) (Filobasidiella neoformans)).